The following is a 398-amino-acid chain: L-glutamine--4-(methylsulfanyl)-2-oxobutanoate aminotransferase (398 aa).

Lys240 is subject to N6-(pyridoxal phosphate)lysine.

Belongs to the class-I pyridoxal-phosphate-dependent aminotransferase family. MtnE subfamily. It depends on pyridoxal 5'-phosphate as a cofactor.

It catalyses the reaction 4-methylsulfanyl-2-oxobutanoate + L-glutamine = 2-oxoglutaramate + L-methionine. Its pathway is amino-acid biosynthesis; L-methionine biosynthesis via salvage pathway; L-methionine from S-methyl-5-thio-alpha-D-ribose 1-phosphate: step 6/6. In terms of biological role, involved in the methylthioribose (MTR) recycling pathway. Catalyzes the formation of methionine from 2-keto-4-methylthiobutyrate (KMTB). This is L-glutamine--4-(methylsulfanyl)-2-oxobutanoate aminotransferase from Bacillus subtilis (strain 168).